A 608-amino-acid chain; its full sequence is Glutamine--fructose-6-phosphate aminotransferase [isomerizing] (608 aa).

Cys-2 functions as the Nucleophile; for GATase activity in the catalytic mechanism. The Glutamine amidotransferase type-2 domain occupies 2-217 (CGIVGILGRG…DGDWAVLTRA (216 aa)). SIS domains lie at 284–423 (LPFD…ERGK) and 456–598 (LARY…VDQP). Lys-603 functions as the For Fru-6P isomerization activity in the catalytic mechanism.

Its subcellular location is the cytoplasm. The catalysed reaction is D-fructose 6-phosphate + L-glutamine = D-glucosamine 6-phosphate + L-glutamate. In terms of biological role, involved in the production of the root hair deformation (HAD) factor specifically on soybean. In Bradyrhizobium diazoefficiens (strain JCM 10833 / BCRC 13528 / IAM 13628 / NBRC 14792 / USDA 110), this protein is Glutamine--fructose-6-phosphate aminotransferase [isomerizing] (nodM).